The primary structure comprises 88 residues: Small ribosomal subunit protein bS20 (88 aa).

2 disordered regions span residues Met-1–Ala-22 and Lys-69–Ala-88.

This sequence belongs to the bacterial ribosomal protein bS20 family.

Functionally, binds directly to 16S ribosomal RNA. In Shouchella clausii (strain KSM-K16) (Alkalihalobacillus clausii), this protein is Small ribosomal subunit protein bS20.